Here is a 332-residue protein sequence, read N- to C-terminus: Ribosomal RNA small subunit methyltransferase C (332 aa).

It belongs to the methyltransferase superfamily. RsmC family. As to quaternary structure, monomer.

The protein resides in the cytoplasm. It carries out the reaction guanosine(1207) in 16S rRNA + S-adenosyl-L-methionine = N(2)-methylguanosine(1207) in 16S rRNA + S-adenosyl-L-homocysteine + H(+). In terms of biological role, specifically methylates the guanine in position 1207 of 16S rRNA in the 30S particle. This Pseudomonas syringae pv. tomato (strain ATCC BAA-871 / DC3000) protein is Ribosomal RNA small subunit methyltransferase C.